We begin with the raw amino-acid sequence, 81 residues long: ATP synthase subunit c (81 aa).

A run of 2 helical transmembrane segments spans residues 7–27 (AASV…PGLG) and 57–77 (LAFM…LLFA).

This sequence belongs to the ATPase C chain family. As to quaternary structure, F-type ATPases have 2 components, F(1) - the catalytic core - and F(0) - the membrane proton channel. F(1) has five subunits: alpha(3), beta(3), gamma(1), delta(1), epsilon(1). F(0) has four main subunits: a(1), b(1), b'(1) and c(10-14). The alpha and beta chains form an alternating ring which encloses part of the gamma chain. F(1) is attached to F(0) by a central stalk formed by the gamma and epsilon chains, while a peripheral stalk is formed by the delta, b and b' chains.

The protein resides in the cellular thylakoid membrane. Functionally, f(1)F(0) ATP synthase produces ATP from ADP in the presence of a proton or sodium gradient. F-type ATPases consist of two structural domains, F(1) containing the extramembraneous catalytic core and F(0) containing the membrane proton channel, linked together by a central stalk and a peripheral stalk. During catalysis, ATP synthesis in the catalytic domain of F(1) is coupled via a rotary mechanism of the central stalk subunits to proton translocation. Key component of the F(0) channel; it plays a direct role in translocation across the membrane. A homomeric c-ring of between 10-14 subunits forms the central stalk rotor element with the F(1) delta and epsilon subunits. The protein is ATP synthase subunit c of Synechococcus sp. (strain JA-3-3Ab) (Cyanobacteria bacterium Yellowstone A-Prime).